Here is a 215-residue protein sequence, read N- to C-terminus: uncharacterized protein (215 aa).

This sequence belongs to the mimivirus L31/R44 family.

This is an uncharacterized protein from Acanthamoeba polyphaga (Amoeba).